Reading from the N-terminus, the 247-residue chain is 1-(5-phosphoribosyl)-5-[(5-phosphoribosylamino)methylideneamino] imidazole-4-carboxamide isomerase (247 aa).

Residue aspartate 8 is the Proton acceptor of the active site. The active-site Proton donor is aspartate 129.

Belongs to the HisA/HisF family.

It localises to the cytoplasm. The enzyme catalyses 1-(5-phospho-beta-D-ribosyl)-5-[(5-phospho-beta-D-ribosylamino)methylideneamino]imidazole-4-carboxamide = 5-[(5-phospho-1-deoxy-D-ribulos-1-ylimino)methylamino]-1-(5-phospho-beta-D-ribosyl)imidazole-4-carboxamide. It participates in amino-acid biosynthesis; L-histidine biosynthesis; L-histidine from 5-phospho-alpha-D-ribose 1-diphosphate: step 4/9. The polypeptide is 1-(5-phosphoribosyl)-5-[(5-phosphoribosylamino)methylideneamino] imidazole-4-carboxamide isomerase (Solidesulfovibrio magneticus (strain ATCC 700980 / DSM 13731 / RS-1) (Desulfovibrio magneticus)).